A 175-amino-acid chain; its full sequence is Large ribosomal subunit protein uL10 (175 aa).

It belongs to the universal ribosomal protein uL10 family. In terms of assembly, part of the ribosomal stalk of the 50S ribosomal subunit. The N-terminus interacts with L11 and the large rRNA to form the base of the stalk. The C-terminus forms an elongated spine to which L12 dimers bind in a sequential fashion forming a multimeric L10(L12)X complex.

In terms of biological role, forms part of the ribosomal stalk, playing a central role in the interaction of the ribosome with GTP-bound translation factors. This chain is Large ribosomal subunit protein uL10, found in Methylobacterium nodulans (strain LMG 21967 / CNCM I-2342 / ORS 2060).